The chain runs to 121 residues: Transposase InsC for insertion element IS2A (121 aa).

Belongs to the transposase 8 family.

Its function is as follows. Involved in the transposition of the insertion sequence IS2. The polypeptide is Transposase InsC for insertion element IS2A (insC1) (Escherichia coli (strain K12)).